The sequence spans 635 residues: MPIITLPDGNQRQFDNTTSIMEIAADIGPGLAKACIAGRVDGQLVDACDPIEKDANIAIITAKDDQGLEILRHSCAHLLGHAIKQLYPNAKMAIGPTIENGFYYDIDLDVTINDDELAKIAKRMNELVKTNYTVVKEKVSVEEAKALFKERGESYKLEILEGIHPDDRPGLYHHEEYIDMCRGPHVPVMKFCQYFKLMKVSGAYWRGNSDNKMLQRIYGTAWADKKQLNAYLKRLEEAAKRDHRKIGKQLDLYHMQEEAPGMVFWHSNGWTIYRELEKYVREQTEAYDYQEVKAPQILDRALWEKSGHWGKYKDNMFCTSSENRDYAIKPMNCPGHLQIFNQGLKSYRDLPLRMAEFGSCHRNEPSGSLHGLMRVRAFTQDDAHIFCTEEQILDEVSACIQMVFECYKTFGFDDIAVKLSTRPDQRVGDDATWDKAEAALANALTTNNINYGVLPGEGAFYGPKIEFTLYDCLGRGWQCGTIQLDFSMPGRLDASFVGEDNERHTPVMIHRAILGSLERFIGILTEEYAGVYPTWLSPKQVVVMNITDKQSAFVDEVVNKLKKSGIRAISDLRNEKIGFKIREHTLKRVPYLLVIGDQEVEAGEVAVRTRKGDDLGKFKVDDFAAYIKEEIITRR.

A TGS domain is found at 1–61; sequence MPIITLPDGN…EKDANIAIIT (61 aa). A catalytic region spans residues 242 to 533; the sequence is DHRKIGKQLD…LTEEYAGVYP (292 aa). Zn(2+) contacts are provided by Cys333, His384, and His510.

Belongs to the class-II aminoacyl-tRNA synthetase family. In terms of assembly, homodimer. Zn(2+) serves as cofactor.

It is found in the cytoplasm. The enzyme catalyses tRNA(Thr) + L-threonine + ATP = L-threonyl-tRNA(Thr) + AMP + diphosphate + H(+). Functionally, catalyzes the attachment of threonine to tRNA(Thr) in a two-step reaction: L-threonine is first activated by ATP to form Thr-AMP and then transferred to the acceptor end of tRNA(Thr). Also edits incorrectly charged L-seryl-tRNA(Thr). The polypeptide is Threonine--tRNA ligase (Psychromonas ingrahamii (strain DSM 17664 / CCUG 51855 / 37)).